The primary structure comprises 77 residues: UPF0346 protein LMOf2365_1885 (77 aa).

This sequence belongs to the UPF0346 family.

The sequence is that of UPF0346 protein LMOf2365_1885 from Listeria monocytogenes serotype 4b (strain F2365).